Reading from the N-terminus, the 282-residue chain is 4-diphosphocytidyl-2-C-methyl-D-erythritol kinase (282 aa).

Residue Lys11 is part of the active site. 93 to 103 (LVSAGLAGGSA) provides a ligand contact to ATP. The active site involves Asp133.

It belongs to the GHMP kinase family. IspE subfamily.

The catalysed reaction is 4-CDP-2-C-methyl-D-erythritol + ATP = 4-CDP-2-C-methyl-D-erythritol 2-phosphate + ADP + H(+). It participates in isoprenoid biosynthesis; isopentenyl diphosphate biosynthesis via DXP pathway; isopentenyl diphosphate from 1-deoxy-D-xylulose 5-phosphate: step 3/6. Catalyzes the phosphorylation of the position 2 hydroxy group of 4-diphosphocytidyl-2C-methyl-D-erythritol. This is 4-diphosphocytidyl-2-C-methyl-D-erythritol kinase from Ehrlichia chaffeensis (strain ATCC CRL-10679 / Arkansas).